The following is a 140-amino-acid chain: Large ribosomal subunit protein uL24 (140 aa).

It belongs to the universal ribosomal protein uL24 family. In terms of assembly, part of the 50S ribosomal subunit.

In terms of biological role, one of two assembly initiator proteins, it binds directly to the 5'-end of the 23S rRNA, where it nucleates assembly of the 50S subunit. Its function is as follows. Located at the polypeptide exit tunnel on the outside of the subunit. This Nanoarchaeum equitans (strain Kin4-M) protein is Large ribosomal subunit protein uL24.